The sequence spans 457 residues: Chromosomal replication initiator protein DnaA (457 aa).

The tract at residues methionine 1 to phenylalanine 75 is domain I, interacts with DnaA modulators. Positions phenylalanine 75–alanine 118 are domain II. The segment at threonine 119–serine 335 is domain III, AAA+ region. Residues glycine 163, glycine 165, lysine 166, and threonine 167 each coordinate ATP. Positions serine 336–lysine 457 are domain IV, binds dsDNA.

It belongs to the DnaA family. In terms of assembly, oligomerizes as a right-handed, spiral filament on DNA at oriC.

The protein resides in the cytoplasm. Plays an essential role in the initiation and regulation of chromosomal replication. ATP-DnaA binds to the origin of replication (oriC) to initiate formation of the DNA replication initiation complex once per cell cycle. Binds the DnaA box (a 9 base pair repeat at the origin) and separates the double-stranded (ds)DNA. Forms a right-handed helical filament on oriC DNA; dsDNA binds to the exterior of the filament while single-stranded (ss)DNA is stabiized in the filament's interior. The ATP-DnaA-oriC complex binds and stabilizes one strand of the AT-rich DNA unwinding element (DUE), permitting loading of DNA polymerase. After initiation quickly degrades to an ADP-DnaA complex that is not apt for DNA replication. Binds acidic phospholipids. This is Chromosomal replication initiator protein DnaA from Clostridium perfringens (strain ATCC 13124 / DSM 756 / JCM 1290 / NCIMB 6125 / NCTC 8237 / Type A).